We begin with the raw amino-acid sequence, 581 residues long: Zinc metalloproteinase nas-36 (581 aa).

A propeptide spanning residues 1 to 95 (MKEIAHSQAY…FRGANEKGKR (95 aa)) is cleaved from the precursor. Asparagine 67 carries an N-linked (GlcNAc...) asparagine glycan. The Peptidase M12A domain occupies 97–290 (AAEYDAKWFQ…IKLINEAYCK (194 aa)). Intrachain disulfides connect cysteine 137-cysteine 289, cysteine 159-cysteine 178, cysteine 293-cysteine 313, cysteine 315-cysteine 324, and cysteine 336-cysteine 364. Histidine 186 serves as a coordination point for Zn(2+). Glutamate 187 is a catalytic residue. Positions 190 and 196 each coordinate Zn(2+). Positions 285 to 325 (NEAYCKGDCKEKNECKNGGYLNPSNCQSCLCPSGFGGSKCE) constitute an EGF-like domain. Positions 336-449 (CGGTLKAIID…TGFKLKFRKT (114 aa)) constitute a CUB domain. Residue asparagine 418 is glycosylated (N-linked (GlcNAc...) asparagine). The TSP type-1 domain occupies 474–523 (NDIWSEWGEWSQCSRSCGACGIKSRLRICKTAQCSGKVQQFLTCNLQACP). Intrachain disulfides connect cysteine 486-cysteine 517, cysteine 490-cysteine 522, and cysteine 502-cysteine 507.

It depends on Zn(2+) as a cofactor.

The protein localises to the secreted. Its activity is regulated as follows. Inhibited by 1,10-phenanthroline. In terms of biological role, metalloprotease. Involved in molting, a process during larval stages in which a new cuticle is formed and the old cuticle is shed. The chain is Zinc metalloproteinase nas-36 from Brugia malayi (Filarial nematode worm).